Reading from the N-terminus, the 916-residue chain is Translation initiation factor IF-2 (916 aa).

Basic and acidic residues predominate over residues 151–191; the sequence is NLDEQQRLAESDRARDEAIQRKRDEEQAAKDRVEAERKAAE. Disordered regions lie at residues 151–262 and 280–328; these read NLDE…SHVM and HLSA…ERPT. 2 stretches are compositionally biased toward low complexity: residues 192 to 243 and 293 to 305; these read EAAA…ATPA and RGKPTGRPGSSSS. A tr-type G domain is found at 415-584; that stretch reads SRPPVVTIMG…SLQAEVLELK (170 aa). The tract at residues 424 to 431 is G1; that stretch reads GHVDHGKT. 424-431 provides a ligand contact to GTP; that stretch reads GHVDHGKT. The G2 stretch occupies residues 449–453; the sequence is GITQH. Residues 470–473 form a G3 region; that stretch reads DTPG. GTP is bound by residues 470 to 474 and 524 to 527; these read DTPGH and NKID. The interval 524 to 527 is G4; the sequence is NKID. A G5 region spans residues 560–562; that stretch reads SAK.

The protein belongs to the TRAFAC class translation factor GTPase superfamily. Classic translation factor GTPase family. IF-2 subfamily.

It localises to the cytoplasm. In terms of biological role, one of the essential components for the initiation of protein synthesis. Protects formylmethionyl-tRNA from spontaneous hydrolysis and promotes its binding to the 30S ribosomal subunits. Also involved in the hydrolysis of GTP during the formation of the 70S ribosomal complex. In Xanthomonas campestris pv. campestris (strain ATCC 33913 / DSM 3586 / NCPPB 528 / LMG 568 / P 25), this protein is Translation initiation factor IF-2.